The chain runs to 428 residues: Cytochrome P450-terp (428 aa).

Cys-377 is a heme binding site.

Belongs to the cytochrome P450 family. Heme serves as cofactor.

It is found in the cytoplasm. Functionally, catalyzes the hydroxylation of alpha-terpineol. The protein is Cytochrome P450-terp (cyp108) of Pseudomonas sp.